The following is a 638-amino-acid chain: 1-deoxy-D-xylulose-5-phosphate synthase (638 aa).

Residues histidine 79 and 120–122 (AHS) each bind thiamine diphosphate. Aspartate 151 provides a ligand contact to Mg(2+). Thiamine diphosphate is bound by residues 152 to 153 (GA), asparagine 180, tyrosine 289, and glutamate 371. Asparagine 180 contributes to the Mg(2+) binding site.

This sequence belongs to the transketolase family. DXPS subfamily. In terms of assembly, homodimer. Mg(2+) is required as a cofactor. It depends on thiamine diphosphate as a cofactor.

The enzyme catalyses D-glyceraldehyde 3-phosphate + pyruvate + H(+) = 1-deoxy-D-xylulose 5-phosphate + CO2. It participates in metabolic intermediate biosynthesis; 1-deoxy-D-xylulose 5-phosphate biosynthesis; 1-deoxy-D-xylulose 5-phosphate from D-glyceraldehyde 3-phosphate and pyruvate: step 1/1. Functionally, catalyzes the acyloin condensation reaction between C atoms 2 and 3 of pyruvate and glyceraldehyde 3-phosphate to yield 1-deoxy-D-xylulose-5-phosphate (DXP). The chain is 1-deoxy-D-xylulose-5-phosphate synthase from Rhizobium etli (strain CIAT 652).